The primary structure comprises 356 residues: Nucleotide-binding protein GDI1189/Gdia_1902 (356 aa).

An ATP-binding site is contributed by 20–27 (GLSGAGKS). Residue 65–68 (DSRT) coordinates GTP. The segment at 285–313 (EPGGTCDSPGKPAHIEKGAAPTDVQSGGA) is disordered.

This sequence belongs to the RapZ-like family.

Its function is as follows. Displays ATPase and GTPase activities. In Gluconacetobacter diazotrophicus (strain ATCC 49037 / DSM 5601 / CCUG 37298 / CIP 103539 / LMG 7603 / PAl5), this protein is Nucleotide-binding protein GDI1189/Gdia_1902.